A 174-amino-acid chain; its full sequence is Dehydratase AgnL8 (174 aa).

Substrate contacts are provided by Y24, Y44, and F47. Residues H79 and H104 contribute to the active site.

The protein belongs to the scytalone dehydratase family. As to quaternary structure, homotrimer. Each subunit contains an active site, located in the central part of the hydrophobic core of the monomer, which functions independently.

Its pathway is secondary metabolite biosynthesis. Dehydratase; part of the gene cluster that mediates the biosynthesis of agnestins, dihydroxy-xanthone metabolites. The pathway begins with the assembly and cyclization of atrochrysone thioester by the non-reducing polyketide synthase Agnpks1. The atrochrysone carboxyl ACP thioesterase AgnL7 then breaks the thioester bond and releases the atrochrysone carboxylic acid as the first enzyme-free intermediate. The decarboxylase AgnL1 then catalyzes the concerted decarboxylation-elimination required to convert atochrysone carboxylic acid into emodin anthrone, which is further oxidized to emodin by the anthrone oxygenase AgnL2. Emodin then undergoes reduction catalyzed by the oxidoreductase AgnL4 to yield the dihydroquinone tautomer which is the substrate for reduction by the short chain dehydrogenase AgnL6 reduction to produce hydroxyketone, followed by AgnL8 dehydration and likely spontaneous autoxidation to chrysophanol. Baeyer-Villiger oxidation by the oxidase AgnL3 leads to monodictyphenone via cleavage of the C-10/C-10a bond of chrysophanol. Alternative cleavage at the C-4a/C-10 bond of chrysophanol also leads to the formation some cephalone F. Further conversion to agnestins A and B, requires reduction to dihydro-monodictyphenone, oxidation to agnestin C probably via an epoxide, and rearrangement to either agnestin A or agnestin B directly, although agnestin A or agnestin B can also interconvert. Within the cluster, AgnR1 is the only unassigned oxidoreductase present which could be involved in this conversion. However, AgnR1 seems not to be involved in this step, and thus genes involved in the proposed oxidation/reduction may be located elsewhere on the genome. Further agnestin A derivatives are probably formed by spontaneous decarboxylations, dehydrations and methanolysis reactions. The chain is Dehydratase AgnL8 from Paecilomyces divaricatus (Penicillium divaricatum).